The chain runs to 237 residues: High-affinity branched-chain amino acid transport ATP-binding protein LivF (237 aa).

Residues 6-237 enclose the ABC transporter domain; it reads LSFDKVSAHY…EAVRSAYLGG (232 aa). Residue 38–45 coordinates ATP; the sequence is GANGAGKT.

The protein belongs to the ABC transporter superfamily.

Its function is as follows. Component of the leucine-specific transport system. This Escherichia coli (strain K12) protein is High-affinity branched-chain amino acid transport ATP-binding protein LivF (livF).